Reading from the N-terminus, the 217-residue chain is Large ribosomal subunit protein uL1 (217 aa).

It belongs to the universal ribosomal protein uL1 family.

The chain is Large ribosomal subunit protein uL1 (RPL10A) from Eremothecium gossypii (strain ATCC 10895 / CBS 109.51 / FGSC 9923 / NRRL Y-1056) (Yeast).